Reading from the N-terminus, the 570-residue chain is Urease subunit alpha (570 aa).

One can recognise a Urease domain in the interval 131–570 (GGFDAHIHFI…LPMAQRYFLF (440 aa)). The Ni(2+) site is built by His136, His138, and Lys219. N6-carboxylysine is present on Lys219. His221 provides a ligand contact to substrate. Ni(2+) is bound by residues His248 and His274. Catalysis depends on His322, which acts as the Proton donor. Asp362 provides a ligand contact to Ni(2+).

The protein belongs to the metallo-dependent hydrolases superfamily. Urease alpha subunit family. In terms of assembly, heterotrimer of UreA (gamma), UreB (beta) and UreC (alpha) subunits. Three heterotrimers associate to form the active enzyme. Requires Ni cation as cofactor. Post-translationally, carboxylation allows a single lysine to coordinate two nickel ions.

The protein resides in the cytoplasm. It carries out the reaction urea + 2 H2O + H(+) = hydrogencarbonate + 2 NH4(+). It participates in nitrogen metabolism; urea degradation; CO(2) and NH(3) from urea (urease route): step 1/1. The protein is Urease subunit alpha of Chelativorans sp. (strain BNC1).